A 654-amino-acid chain; its full sequence is Hepatocyte growth factor activator serine proteases (654 aa).

An N-terminal signal peptide occupies residues 1–33 (MGRWAWGPSLCPLPGMALLLLLLLLLVPHGAQP). The interval 34 to 100 (QAGGNLTEPP…SSSPGDPVLT (67 aa)) is disordered. Residues 34 to 370 (QAGGNLTEPP…RLAACESLAR (337 aa)) constitute a propeptide, removed in mature form. N-linked (GlcNAc...) asparagine glycans are attached at residues asparagine 38 and asparagine 46. A compositionally biased stretch (low complexity) spans 57-81 (PVTSVTPVTPATSAPEAQGPRGRGL). The Fibronectin type-II domain maps to 101 to 148 (VDGQPCRFPFRYGGRMLHACTSEGSAHRKWCATTHNYDRDRAWGYCVQ). Disulfide bonds link cysteine 106–cysteine 131, cysteine 120–cysteine 146, cysteine 162–cysteine 173, cysteine 167–cysteine 184, cysteine 186–cysteine 195, cysteine 200–cysteine 228, cysteine 226–cysteine 235, cysteine 243–cysteine 254, cysteine 248–cysteine 265, cysteine 267–cysteine 276, cysteine 284–cysteine 365, cysteine 305–cysteine 347, cysteine 336–cysteine 360, cysteine 393–cysteine 520, cysteine 431–cysteine 447, cysteine 439–cysteine 509, cysteine 534–cysteine 603, cysteine 566–cysteine 582, and cysteine 593–cysteine 621. The 39-residue stretch at 158–196 (ALDSCASSPCLNGGSCSHTQDPGSYHCTCPMAFTGRNCD) folds into the EGF-like 1 domain. The 41-residue stretch at 198-238 (EKCFDETRYEHLEAGDRWARVSQGQVEQCECAGGQIRCEGT) folds into the Fibronectin type-I domain. Residues 239–277 (RHTACLSSPCLNGGTCHLIVATGTTVCSCPPGHAGRLCN) form the EGF-like 2 domain. A Kringle domain is found at 283–365 (RCFVGNGTEY…SWEYCRLAAC (83 aa)). Asparagine 288 carries N-linked (GlcNAc...) asparagine glycosylation. Positions 407–645 (IIGGSSSLPG…YVDWIKDRIW (239 aa)) constitute a Peptidase S1 domain. Histidine 446 acts as the Charge relay system in catalysis. N-linked (GlcNAc...) asparagine glycosylation is found at asparagine 467 and asparagine 491. The active-site Charge relay system is the aspartate 496. Asparagine 545 carries N-linked (GlcNAc...) asparagine glycosylation. Serine 597 functions as the Charge relay system in the catalytic mechanism.

Belongs to the peptidase S1 family. Heterodimer of a short chain and a long chain linked by a disulfide bond. In terms of processing, the active form of HGFAC presents in the serum is derived from the COOH-terminal region of the precursor by the cleavage of bonds between Arg-370 and Ile-371 and Arg-406 and Ile-407. Liver.

The protein resides in the secreted. In terms of biological role, serine protease that hydrolyzes the inactive zymogen hepatocyte growth factor (HGFsc) to an activated disulfide-linked heterodimer, then initiating hepatocyte growth factor receptor signaling pathway. The polypeptide is Hepatocyte growth factor activator serine proteases (HGFAC) (Canis lupus familiaris (Dog)).